The primary structure comprises 272 residues: NADPH-dependent aldehyde reductase 2, chloroplastic (272 aa).

A chloroplast-targeting transit peptide spans 1 to 53; it reads MAAASSVSSPPLCLAGRVAIVTGSSRGIGRAIAIHLAELGARVVVNYSTSPVE. 26–50 serves as a coordination point for NADP(+); that stretch reads RGIGRAIAIHLAELGARVVVNYSTS. Ser165 serves as a coordination point for substrate. Tyr179 (proton acceptor) is an active-site residue.

Belongs to the short-chain dehydrogenases/reductases (SDR) family.

The protein resides in the plastid. Its subcellular location is the chloroplast. In terms of biological role, aldehyde reductase that catalyzes the reduction of the aldehyde carbonyl groups on saturated and alpha,beta-unsaturated aldehydes with more than 5 carbons. No activity on alpha,beta-unsaturated ketones. Can use propionaldehyde, butyraldehyde, methylglyoxal, (e)-2-pentenal, (E)-2-hexenal, (Z)-3-hexenal and (E)-2-nonenal as substrates, but not propenal (acrolein), crotonaldehyde, 2-butanone, 3-buten-2-one or 1-penten-3-one. The chain is NADPH-dependent aldehyde reductase 2, chloroplastic from Arabidopsis thaliana (Mouse-ear cress).